The primary structure comprises 393 residues: MNVPTTRKDLMIVNMGPQHPSMHGVLRLIVTLDGEDVIDCEPILGYLHRGMEKIAENRTIIQYLPYVTRWDYLATMFTEAITVNGPEQLGNIQVPKRASYIRVIMLELSRIASHLLWLGPFMADIGAQTPFFYIFRERELIYDLFEAATGMRMMHNFFRIGGVSADLPYGWIDKCFDFCNYFLTRVIEYQKLITRNPIFLERVEGVGIIGREEVINWGLSGPMLRASGIQWDLRKVDNYECYEEFDWEVQWQKEGDSLARYLVRIGEMMESIKIIQQALEGIPGGPYENLEIRSFDREKEPEWNDFEYRFIGKKSSPTFELPKQELYVRVEAPKGELGIFLIGDQNGFPWRWKIRPPGFINLQILPQLVKRMKLADIMTILGSIDIIMGEIDR.

The protein belongs to the complex I 49 kDa subunit family. NDH is composed of at least 16 different subunits, 5 of which are encoded in the nucleus.

The protein localises to the plastid. It localises to the chloroplast thylakoid membrane. It carries out the reaction a plastoquinone + NADH + (n+1) H(+)(in) = a plastoquinol + NAD(+) + n H(+)(out). The catalysed reaction is a plastoquinone + NADPH + (n+1) H(+)(in) = a plastoquinol + NADP(+) + n H(+)(out). NDH shuttles electrons from NAD(P)H:plastoquinone, via FMN and iron-sulfur (Fe-S) centers, to quinones in the photosynthetic chain and possibly in a chloroplast respiratory chain. The immediate electron acceptor for the enzyme in this species is believed to be plastoquinone. Couples the redox reaction to proton translocation, and thus conserves the redox energy in a proton gradient. In Cicer arietinum (Chickpea), this protein is NAD(P)H-quinone oxidoreductase subunit H, chloroplastic.